The sequence spans 218 residues: Peptide deformylase 1 (218 aa).

Fe cation is bound by residues cysteine 126 and histidine 168. Residue glutamate 169 is part of the active site. Histidine 172 serves as a coordination point for Fe cation.

It belongs to the polypeptide deformylase family. It depends on Fe(2+) as a cofactor.

It catalyses the reaction N-terminal N-formyl-L-methionyl-[peptide] + H2O = N-terminal L-methionyl-[peptide] + formate. Functionally, removes the formyl group from the N-terminal Met of newly synthesized proteins. Requires at least a dipeptide for an efficient rate of reaction. N-terminal L-methionine is a prerequisite for activity but the enzyme has broad specificity at other positions. The sequence is that of Peptide deformylase 1 from Streptomyces coelicolor (strain ATCC BAA-471 / A3(2) / M145).